The sequence spans 344 residues: 3-isopropylmalate dehydrogenase (344 aa).

The substrate site is built by R93, R103, R131, and D215. Mg(2+)-binding residues include D215, D239, and D243. Position 273–285 (273–285 (GSAPDIAGKGIAN)) interacts with NAD(+).

The protein belongs to the isocitrate and isopropylmalate dehydrogenases family. LeuB type 1 subfamily. As to quaternary structure, homodimer. Mg(2+) is required as a cofactor. The cofactor is Mn(2+).

The protein resides in the cytoplasm. The enzyme catalyses (2R,3S)-3-isopropylmalate + NAD(+) = 4-methyl-2-oxopentanoate + CO2 + NADH. The protein operates within amino-acid biosynthesis; L-leucine biosynthesis; L-leucine from 3-methyl-2-oxobutanoate: step 3/4. In terms of biological role, catalyzes the oxidation of 3-carboxy-2-hydroxy-4-methylpentanoate (3-isopropylmalate) to 3-carboxy-4-methyl-2-oxopentanoate. The product decarboxylates to 4-methyl-2 oxopentanoate. The protein is 3-isopropylmalate dehydrogenase of Streptococcus mutans serotype c (strain ATCC 700610 / UA159).